The primary structure comprises 215 residues: Probable phosphoglycerate mutase GpmB (215 aa).

Substrate contacts are provided by residues arginine 8–asparagine 15, glutamine 21–glycine 22, arginine 58, arginine 60, glutamate 82–methionine 85, and glycine 151–isoleucine 152. The active-site Tele-phosphohistidine intermediate is histidine 9. The active-site Proton donor/acceptor is glutamate 82.

The protein belongs to the phosphoglycerate mutase family. GpmB subfamily.

The enzyme catalyses (2R)-2-phosphoglycerate = (2R)-3-phosphoglycerate. It participates in carbohydrate degradation; glycolysis; pyruvate from D-glyceraldehyde 3-phosphate: step 3/5. This Photorhabdus laumondii subsp. laumondii (strain DSM 15139 / CIP 105565 / TT01) (Photorhabdus luminescens subsp. laumondii) protein is Probable phosphoglycerate mutase GpmB.